Here is a 770-residue protein sequence, read N- to C-terminus: Protein PAT1 homolog 1 (770 aa).

Residues 1-42 (MFRYESLEDCPLDEDEDAFQGLGEEDEEIDQFNDDTFGSGAV) form a disordered region. The interval 1-84 (MFRYESLEDC…EMDLLGDHEE (84 aa)) is region A; interaction with DDX6/RCK. The segment at 1–397 (MFRYESLEDC…HRVSHQDHLR (397 aa)) is involved in nuclear foci localization. Positions 7–33 (LEDCPLDEDEDAFQGLGEEDEEIDQFN) are enriched in acidic residues. Positions 85 to 388 (NLAERLSKMV…LNGTGDRGGH (304 aa)) are region N; interaction with decapping machinery. Positions 86–95 (LAERLSKMVI) match the Nuclear export signal motif. The residue at position 177 (Ser-177) is a Phosphoserine. The residue at position 178 (Thr-178) is a Phosphothreonine. Ser-179 and Ser-184 each carry phosphoserine. At Thr-194 the chain carries Phosphothreonine. Residues Arg-217, Arg-223, and Arg-263 each carry the asymmetric dimethylarginine modification. Residues 223–397 (RYPAPYGERM…HRVSHQDHLR (175 aa)) form an involved in RNA-binding region. A Phosphoserine modification is found at Ser-278. Arg-284 is subject to Asymmetric dimethylarginine. Disordered stretches follow at residues 320–341 (SAPP…PHLQ) and 369–394 (QLQS…SHQD). Residues 321 to 337 (APPPATPPPQQHPPGPG) show a composition bias toward pro residues. Over residues 369–380 (QLQSRNQHRNLN) the composition is skewed to low complexity. The residue at position 385 (Arg-385) is an Omega-N-methylarginine. Over residues 385-394 (RGGHRVSHQD) the composition is skewed to basic and acidic residues. A region H region spans residues 389 to 448 (RVSHQDHLRKDPYANLMLQREKDWVSKIQMMQLQSTDPYLDDFYYQNYFEKLEKSSAAEE). The involved in nuclear speckle localization stretch occupies residues 398–770 (KDPYANLMLQ…TKLQLVQGMR (373 aa)). The tract at residues 449–770 (MQGDGPKKER…TKLQLVQGMR (322 aa)) is region C.

This sequence belongs to the PAT1 family. Interacts (via region A) with DDX6/RCK. Interacts (via region H and region C) with LSM1 and LSM4. Interacts (via region N) with DCP1A, DCP2, EDC3, EDC4 and XRN1. Interacts with the CCR4-NOT complex. Interacts with the Lsm-containing SMN-Sm protein complex. Interacts with EIF4ENIF1/4E-T.

Its subcellular location is the cytoplasm. It is found in the P-body. The protein resides in the nucleus. It localises to the PML body. The protein localises to the nucleus speckle. In terms of biological role, RNA-binding protein involved in deadenylation-dependent decapping of mRNAs, leading to the degradation of mRNAs. Acts as a scaffold protein that connects deadenylation and decapping machinery. Required for cytoplasmic mRNA processing body (P-body) assembly. In Rattus norvegicus (Rat), this protein is Protein PAT1 homolog 1 (Patl1).